Consider the following 289-residue polypeptide: Glucosamine-6-phosphate deaminase 1 (289 aa).

Asp-72 functions as the Proton acceptor; for enolization step in the catalytic mechanism. The For ring-opening step role is filled by Asp-141. The active-site Proton acceptor; for ring-opening step is His-143. Catalysis depends on Glu-148, which acts as the For ring-opening step. Thr-161 carries the post-translational modification Phosphothreonine.

Belongs to the glucosamine/galactosamine-6-phosphate isomerase family. As to quaternary structure, homohexamer. As to expression, widely expressed. Detected in brain, liver, kidney, muscle, ovary, testis, spermatids and spermatozoa. In spermatids, located close to the developing acrosome vesicle. In spermatozoa, found close to the acrosomal region.

The protein localises to the cytoplasm. It carries out the reaction alpha-D-glucosamine 6-phosphate + H2O = beta-D-fructose 6-phosphate + NH4(+). The protein operates within nucleotide-sugar biosynthesis; UDP-N-acetyl-alpha-D-glucosamine biosynthesis; alpha-D-glucosamine 6-phosphate from D-fructose 6-phosphate: step 1/1. Allosterically activated by N-acetylglucosamine-6-phosphate (GlcNAc6P). Functionally, catalyzes the reversible conversion of alpha-D-glucosamine 6-phosphate (GlcN-6P) into beta-D-fructose 6-phosphate (Fru-6P) and ammonium ion, a regulatory reaction step in de novo uridine diphosphate-N-acetyl-alpha-D-glucosamine (UDP-GlcNAc) biosynthesis via hexosamine pathway. Deamination is coupled to aldo-keto isomerization mediating the metabolic flux from UDP-GlcNAc toward Fru-6P. At high ammonium level can drive amination and isomerization of Fru-6P toward hexosamines and UDP-GlcNAc synthesis. Has a role in fine tuning the metabolic fluctuations of cytosolic UDP-GlcNAc and their effects on hyaluronan synthesis that occur during tissue remodeling. Seems to trigger calcium oscillations in mammalian eggs. These oscillations serve as the essential trigger for egg activation and early development of the embryo. The protein is Glucosamine-6-phosphate deaminase 1 of Mus musculus (Mouse).